Reading from the N-terminus, the 404-residue chain is uncharacterized protein (404 aa).

2 consecutive transmembrane segments (helical) span residues 35–55 (ILFS…FTFL) and 92–112 (EDIW…ISSI).

The protein resides in the membrane. This is an uncharacterized protein from Saccharomyces cerevisiae (strain ATCC 204508 / S288c) (Baker's yeast).